Consider the following 355-residue polypeptide: Erythronate-4-phosphate dehydrogenase (355 aa).

Residues Ser45 and Thr66 each contribute to the substrate site. Position 146 (Asp146) interacts with NAD(+). Arg206 is a catalytic residue. Residue Asp229 coordinates NAD(+). Residue Glu234 is part of the active site. The active-site Proton donor is His251. Residue Gly254 coordinates NAD(+). Substrate is bound at residue Tyr255.

It belongs to the D-isomer specific 2-hydroxyacid dehydrogenase family. PdxB subfamily. Homodimer.

The protein resides in the cytoplasm. It catalyses the reaction 4-phospho-D-erythronate + NAD(+) = (R)-3-hydroxy-2-oxo-4-phosphooxybutanoate + NADH + H(+). It functions in the pathway cofactor biosynthesis; pyridoxine 5'-phosphate biosynthesis; pyridoxine 5'-phosphate from D-erythrose 4-phosphate: step 2/5. Catalyzes the oxidation of erythronate-4-phosphate to 3-hydroxy-2-oxo-4-phosphonooxybutanoate. In Acinetobacter baumannii (strain SDF), this protein is Erythronate-4-phosphate dehydrogenase.